Here is a 479-residue protein sequence, read N- to C-terminus: Sulfate adenylyltransferase subunit 1 (479 aa).

The 215-residue stretch at K25–R239 folds into the tr-type G domain. Positions G34 to S41 are G1. Position 34–41 (G34–S41) interacts with GTP. The tract at residues G92–D96 is G2. The tract at residues D113–G116 is G3. GTP-binding positions include D113–H117 and N168–D171. The interval N168–D171 is G4. The segment at S206–L208 is G5.

This sequence belongs to the TRAFAC class translation factor GTPase superfamily. Classic translation factor GTPase family. CysN/NodQ subfamily. In terms of assembly, heterodimer composed of CysD, the smaller subunit, and CysN.

The enzyme catalyses sulfate + ATP + H(+) = adenosine 5'-phosphosulfate + diphosphate. It functions in the pathway sulfur metabolism; hydrogen sulfide biosynthesis; sulfite from sulfate: step 1/3. With CysD forms the ATP sulfurylase (ATPS) that catalyzes the adenylation of sulfate producing adenosine 5'-phosphosulfate (APS) and diphosphate, the first enzymatic step in sulfur assimilation pathway. APS synthesis involves the formation of a high-energy phosphoric-sulfuric acid anhydride bond driven by GTP hydrolysis by CysN coupled to ATP hydrolysis by CysD. In Salmonella typhi, this protein is Sulfate adenylyltransferase subunit 1.